A 559-amino-acid polypeptide reads, in one-letter code: GTP diphosphokinase CRSH2, chloroplastic (559 aa).

Residues 1–37 (MASAGGEVVVVDPAAAAVAPDVEHHAPAPRLTPAGSG) constitute a chloroplast transit peptide. Residues 87–187 (SLARALIVAA…LELAIRLDAM (101 aa)) enclose the HD domain. 2 consecutive EF-hand domains span residues 449–484 (ASAGNIERAFRLLDKNGDGRISMEELTELMEDLGAG) and 486–518 (KDAEELMRLLDDNNDGSLSSDEFALFQKRVELK). The Ca(2+) site is built by D462, N464, D466, R468, E473, D496, N498, D500, S502, and E507.

Belongs to the RelA/SpoT family. As to expression, expressed in shoots.

Its subcellular location is the plastid. It is found in the chloroplast. The enzyme catalyses GTP + ATP = guanosine 3'-diphosphate 5'-triphosphate + AMP. Its activity is regulated as follows. Activated by calcium. In terms of biological role, possesses calcium-dependent ppGpp (guanosine 3'-diphosphate 5'-diphosphate) synthetase activity in vitro and is able to functionally complement E.coli relA mutants. May be involved in a rapid plant ppGpp-mediated response to pathogens and other stresses. In Oryza sativa subsp. japonica (Rice), this protein is GTP diphosphokinase CRSH2, chloroplastic.